A 203-amino-acid polypeptide reads, in one-letter code: GTP-binding protein yptV1 (203 aa).

GTP contacts are provided by residues G15–C23, Y33–T40, D63–Q67, N121–D124, and S151–K153. The Effector region motif lies at Y37–F45. The tract at residues M173–C203 is disordered. S-geranylgeranyl cysteine attachment occurs at residues C202 and C203.

This sequence belongs to the small GTPase superfamily. Rab family.

It is found in the cell membrane. In terms of biological role, protein transport. Probably involved in vesicular traffic. This Volvox carteri (Green alga) protein is GTP-binding protein yptV1 (YPTV1).